Consider the following 72-residue polypeptide: Translation initiation factor IF-1 (72 aa).

An S1-like domain is found at 1 to 72; sequence MAREDHIEME…SKGRIVYRAR (72 aa).

It belongs to the IF-1 family. In terms of assembly, component of the 30S ribosomal translation pre-initiation complex which assembles on the 30S ribosome in the order IF-2 and IF-3, IF-1 and N-formylmethionyl-tRNA(fMet); mRNA recruitment can occur at any time during PIC assembly.

The protein localises to the cytoplasm. In terms of biological role, one of the essential components for the initiation of protein synthesis. Stabilizes the binding of IF-2 and IF-3 on the 30S subunit to which N-formylmethionyl-tRNA(fMet) subsequently binds. Helps modulate mRNA selection, yielding the 30S pre-initiation complex (PIC). Upon addition of the 50S ribosomal subunit IF-1, IF-2 and IF-3 are released leaving the mature 70S translation initiation complex. The sequence is that of Translation initiation factor IF-1 from Chromohalobacter salexigens (strain ATCC BAA-138 / DSM 3043 / CIP 106854 / NCIMB 13768 / 1H11).